A 287-amino-acid chain; its full sequence is Small ribosomal subunit protein uS2 (287 aa).

Positions 254–277 (LASATASATPSATASTTALTDAPA) are enriched in low complexity. The disordered stretch occupies residues 254–287 (LASATASATPSATASTTALTDAPAGATEPTTDAS).

Belongs to the universal ribosomal protein uS2 family.

This is Small ribosomal subunit protein uS2 (rpsB) from Mycobacterium tuberculosis (strain CDC 1551 / Oshkosh).